A 410-amino-acid polypeptide reads, in one-letter code: Imidazolonepropionase (410 aa).

The Fe(3+) site is built by His-73 and His-75. Zn(2+) contacts are provided by His-73 and His-75. 4-imidazolone-5-propanoate-binding residues include Arg-82, Tyr-145, and His-178. Tyr-145 contributes to the N-formimidoyl-L-glutamate binding site. His-243 serves as a coordination point for Fe(3+). His-243 contacts Zn(2+). Gln-246 contributes to the 4-imidazolone-5-propanoate binding site. Residue Asp-318 participates in Fe(3+) binding. Residue Asp-318 participates in Zn(2+) binding. Residues Asn-320 and Gly-322 each coordinate N-formimidoyl-L-glutamate. Ser-323 is a binding site for 4-imidazolone-5-propanoate.

The protein belongs to the metallo-dependent hydrolases superfamily. HutI family. The cofactor is Zn(2+). Fe(3+) serves as cofactor.

The protein resides in the cytoplasm. The enzyme catalyses 4-imidazolone-5-propanoate + H2O = N-formimidoyl-L-glutamate. It functions in the pathway amino-acid degradation; L-histidine degradation into L-glutamate; N-formimidoyl-L-glutamate from L-histidine: step 3/3. Its function is as follows. Catalyzes the hydrolytic cleavage of the carbon-nitrogen bond in imidazolone-5-propanoate to yield N-formimidoyl-L-glutamate. It is the third step in the universal histidine degradation pathway. This Shewanella baltica (strain OS223) protein is Imidazolonepropionase.